Consider the following 417-residue polypeptide: Serine hydroxymethyltransferase (417 aa).

Residues L121 and G125 to L127 contribute to the (6S)-5,6,7,8-tetrahydrofolate site. Position 229 is an N6-(pyridoxal phosphate)lysine (K229). S355–F357 serves as a coordination point for (6S)-5,6,7,8-tetrahydrofolate.

This sequence belongs to the SHMT family. In terms of assembly, homodimer. The cofactor is pyridoxal 5'-phosphate.

The protein resides in the cytoplasm. The catalysed reaction is (6R)-5,10-methylene-5,6,7,8-tetrahydrofolate + glycine + H2O = (6S)-5,6,7,8-tetrahydrofolate + L-serine. Its pathway is one-carbon metabolism; tetrahydrofolate interconversion. It participates in amino-acid biosynthesis; glycine biosynthesis; glycine from L-serine: step 1/1. Its function is as follows. Catalyzes the reversible interconversion of serine and glycine with tetrahydrofolate (THF) serving as the one-carbon carrier. This reaction serves as the major source of one-carbon groups required for the biosynthesis of purines, thymidylate, methionine, and other important biomolecules. Also exhibits THF-independent aldolase activity toward beta-hydroxyamino acids, producing glycine and aldehydes, via a retro-aldol mechanism. The sequence is that of Serine hydroxymethyltransferase from Buchnera aphidicola subsp. Baizongia pistaciae (strain Bp).